The following is a 449-amino-acid chain: ATP-dependent protease ATPase subunit HslU (449 aa).

Residues Ile-18, 60–65 (GVGKTE), Asp-261, Glu-327, and Arg-399 each bind ATP.

Belongs to the ClpX chaperone family. HslU subfamily. As to quaternary structure, a double ring-shaped homohexamer of HslV is capped on each side by a ring-shaped HslU homohexamer. The assembly of the HslU/HslV complex is dependent on binding of ATP.

The protein resides in the cytoplasm. ATPase subunit of a proteasome-like degradation complex; this subunit has chaperone activity. The binding of ATP and its subsequent hydrolysis by HslU are essential for unfolding of protein substrates subsequently hydrolyzed by HslV. HslU recognizes the N-terminal part of its protein substrates and unfolds these before they are guided to HslV for hydrolysis. This is ATP-dependent protease ATPase subunit HslU from Oleidesulfovibrio alaskensis (strain ATCC BAA-1058 / DSM 17464 / G20) (Desulfovibrio alaskensis).